We begin with the raw amino-acid sequence, 229 residues long: Large ribosomal subunit protein uL1 (229 aa).

The protein belongs to the universal ribosomal protein uL1 family. Part of the 50S ribosomal subunit.

In terms of biological role, binds directly to 23S rRNA. The L1 stalk is quite mobile in the ribosome, and is involved in E site tRNA release. Functionally, protein L1 is also a translational repressor protein, it controls the translation of the L11 operon by binding to its mRNA. This Lactiplantibacillus plantarum (strain ATCC BAA-793 / NCIMB 8826 / WCFS1) (Lactobacillus plantarum) protein is Large ribosomal subunit protein uL1.